We begin with the raw amino-acid sequence, 65 residues long: Gallinacin-1 alpha (65 aa).

Residues 1 to 19 (MRIVYLLLPFILLLAQGAA) form the signal peptide. Residues 20 to 25 (GSSQAL) constitute a propeptide that is removed on maturation. Disulfide bonds link Cys31-Cys59, Cys38-Cys53, and Cys43-Cys60.

The protein belongs to the beta-defensin family.

Its subcellular location is the secreted. It is found in the cytoplasmic granule. Has bactericidal activity. Potent activity against E.coli ML-35, L.monocytogenes EGD and C.albicans. The protein is Gallinacin-1 alpha of Gallus gallus (Chicken).